We begin with the raw amino-acid sequence, 654 residues long: Pentatricopeptide repeat-containing protein At4g19191, mitochondrial (654 aa).

The N-terminal 65 residues, 1-65 (MSLIHRRLYR…PFVAKACARL (65 aa)), are a transit peptide targeting the mitochondrion. PPR repeat units lie at residues 86–116 (DVFV…MPER), 117–151 (DATT…EITP), 152–186 (DSVT…GVDV), 187–217 (QVTV…IDRG), 220–254 (TVVS…EFKP), 255–289 (DLST…GTDQ), 290–320 (DIEA…MTSR), 321–355 (TCVS…GEKP), 356–390 (DLVT…GCKR), 392–422 (NVMI…TPEK), 423–457 (TVVT…DYKP), 458–488 (NHIT…MKQV), and 494–524 (GLDH…MSAK). The type E motif stretch occupies residues 529-604 (IWGALLNACK…YPGESVIQVN (76 aa)). Residues 605-635 (GKNHSFTVGEHGHVENEVIYFTLNGLSLFAK) form a type E(+) motif region.

The protein belongs to the PPR family. PCMP-E subfamily.

The protein resides in the mitochondrion. This is Pentatricopeptide repeat-containing protein At4g19191, mitochondrial (PCMP-E1) from Arabidopsis thaliana (Mouse-ear cress).